The primary structure comprises 453 residues: Homogentisate 1,2-dioxygenase (453 aa).

The active-site Proton acceptor is histidine 306. Residues histidine 349 and glutamate 355 each contribute to the Fe cation site. Homogentisate contacts are provided by tyrosine 364 and histidine 385. Position 385 (histidine 385) interacts with Fe cation.

Belongs to the homogentisate dioxygenase family. In terms of assembly, hexamer; dimer of trimers. The cofactor is Fe cation.

The catalysed reaction is homogentisate + O2 = 4-maleylacetoacetate + H(+). It functions in the pathway amino-acid degradation; L-phenylalanine degradation; acetoacetate and fumarate from L-phenylalanine: step 4/6. Involved in the catabolism of homogentisate (2,5-dihydroxyphenylacetate or 2,5-OH-PhAc), a central intermediate in the degradation of phenylalanine and tyrosine. Catalyzes the oxidative ring cleavage of the aromatic ring of homogentisate to yield maleylacetoacetate. The polypeptide is Homogentisate 1,2-dioxygenase (Rhizobium leguminosarum bv. trifolii (strain WSM2304)).